Reading from the N-terminus, the 618-residue chain is MEGAEAGARATFGPWDYGVFATMLLVSTGIGLWVGLARGGQRSADDFFTGGRQLAAVPVGLSLAASFMSAVQVLGVPAEAARYGLKFLWMCVGQLLNSLLTALLFLPIFYRLGLTSTYQYLELRFSRAVRLCGTLQYLVATMLYTGIVIYAPALILNQVTGLDIWASLLSTGIICTLYTTVGGMKAVVWTDVFQVVVMLVGFWVILARGVMLMGGPWNVLSLAQNHSRINLMDFDPDPRSRYTFWTFVVGGSLVWLSMYGVNQAQVQRYVACHTERKAKLALLVNQLGLFLIVASAACCGIVMFVYYKDCDPLLTGRIAAPDQYMPLLVLDIFEDLPGVPGLFLACAYSGTLSTASTSINAMAAVTVEDLIKPRMPSLAPRKLVFISKGLSFIYGSTCLTVAALSSLLGGGVLQGSFTVMGVISGPLLGAFTLGMLLPACNTPGVLSGLTAGLAVSLWVAVGATLYPPGEQTMGVLPTSAAGCTNASVLPSPPGAANTSRGIPSSGMDSGRPAFADTFYAVSYLYYGALGTLTTMLCGALISYLTGPTKRSSLGPGLLWWDLARQTASVAPKEDTTTLEDSLVKGPEDIPAATKKPPGFRPEAETHPLYLGHDVETNL.

Residues 1–14 lie on the Extracellular side of the membrane; it reads MEGAEAGARATFGP. The chain crosses the membrane as a helical span at residues 15–31; the sequence is WDYGVFATMLLVSTGIG. The Cytoplasmic portion of the chain corresponds to 32–56; it reads LWVGLARGGQRSADDFFTGGRQLAA. The discontinuously helical transmembrane segment at 57–80 threads the bilayer; it reads VPVGLSLAASFMSAVQVLGVPAEA. 3 residues coordinate Na(+): Ser-69, Val-71, and Gln-72. Val-76 is a binding site for iodide. The Extracellular segment spans residues 81–84; the sequence is ARYG. A helical membrane pass occupies residues 85-105; that stretch reads LKFLWMCVGQLLNSLLTALLF. Residue Met-90 participates in iodide binding. The Cytoplasmic segment spans residues 106–130; sequence LPIFYRLGLTSTYQYLELRFSRAVR. A helical transmembrane segment spans residues 131–157; the sequence is LCGTLQYLVATMLYTGIVIYAPALILN. A Na(+)-binding site is contributed by Tyr-144. The Extracellular portion of the chain corresponds to 158–163; sequence QVTGLD. The chain crosses the membrane as a helical span at residues 164 to 181; sequence IWASLLSTGIICTLYTTV. Topologically, residues 182 to 189 are cytoplasmic; that stretch reads GGMKAVVW. A helical transmembrane segment spans residues 190–208; that stretch reads TDVFQVVVMLVGFWVILAR. Residues 209–243 lie on the Extracellular side of the membrane; sequence GVMLMGGPWNVLSLAQNHSRINLMDFDPDPRSRYT. The discontinuously helical transmembrane segment at 244 to 266 threads the bilayer; sequence FWTFVVGGSLVWLSMYGVNQAQV. An iodide-binding site is contributed by Trp-255. Met-258 lines the Na(+) pocket. Residues 267–278 are Cytoplasmic-facing; the sequence is QRYVACHTERKA. The helical transmembrane segment at 279 to 301 threads the bilayer; that stretch reads KLALLVNQLGLFLIVASAACCGI. Residues 302–335 lie on the Extracellular side of the membrane; it reads VMFVYYKDCDPLLTGRIAAPDQYMPLLVLDIFED. The chain crosses the membrane as a helical span at residues 336 to 363; that stretch reads LPGVPGLFLACAYSGTLSTASTSINAMA. Residues 364 to 386 are Cytoplasmic-facing; it reads AVTVEDLIKPRMPSLAPRKLVFI. The chain crosses the membrane as a helical span at residues 387–408; it reads SKGLSFIYGSTCLTVAALSSLL. Residues 409 to 411 are Extracellular-facing; it reads GGG. Residues 412–437 form a helical membrane-spanning segment; it reads VLQGSFTVMGVISGPLLGAFTLGMLL. Leu-413 is an iodide binding site. Residues Ser-416 and Phe-417 each coordinate Na(+). Residue Phe-417 participates in iodide binding. The Cytoplasmic segment spans residues 438–441; that stretch reads PACN. The chain crosses the membrane as a helical span at residues 442-465; the sequence is TPGVLSGLTAGLAVSLWVAVGATL. Topologically, residues 466–520 are extracellular; it reads YPPGEQTMGVLPTSAAGCTNASVLPSPPGAANTSRGIPSSGMDSGRPAFADTFYA. Asn-485 and Asn-497 each carry an N-linked (GlcNAc...) asparagine glycan. Residues 521–545 traverse the membrane as a helical segment; that stretch reads VSYLYYGALGTLTTMLCGALISYLT. The Cytoplasmic segment spans residues 546-618; it reads GPTKRSSLGP…YLGHDVETNL (73 aa). Phosphoserine; by PKA is present on Ser-551. The span at 571–587 shows a compositional bias: basic and acidic residues; sequence PKEDTTTLEDSLVKGPE. The tract at residues 571–618 is disordered; sequence PKEDTTTLEDSLVKGPEDIPAATKKPPGFRPEAETHPLYLGHDVETNL.

This sequence belongs to the sodium:solute symporter (SSF) (TC 2.A.21) family. Monomer. Glycosylated.

It is found in the cell membrane. Its subcellular location is the cytoplasm. The enzyme catalyses iodide(out) + 2 Na(+)(out) = iodide(in) + 2 Na(+)(in). The catalysed reaction is chlorate(out) + 2 Na(+)(out) = chlorate(in) + 2 Na(+)(in). It carries out the reaction thiocyanate(out) + 2 Na(+)(out) = thiocyanate(in) + 2 Na(+)(in). It catalyses the reaction nitrate(out) + 2 Na(+)(out) = nitrate(in) + 2 Na(+)(in). The enzyme catalyses selenocyanate(out) + 2 Na(+)(out) = selenocyanate(in) + 2 Na(+)(in). Perchlorate inhibits iodide transport activity. Oxyanions inhibit iodide transport activity by blocking the binding sites for iodide and one of the sodium ions. Functionally, sodium:iodide symporter that mediates the transport of iodide into the thyroid gland. Can also mediate the transport of chlorate, thiocynate, nitrate and selenocynate. This Mus musculus (Mouse) protein is Sodium/iodide cotransporter (Slc5a5).